The primary structure comprises 106 residues: MMKVLVVVALLVTLISYSSSEGIDDLEADELLSLMANEQTRAKACTPRYYDCSHDRHSCCRSSMFKDVCTCFYPEGGDNKEVCTCQQPKHLKYMEKATDKIKNLFG.

The N-terminal stretch at 1–20 (MMKVLVVVALLVTLISYSSS) is a signal peptide. Residues 21 to 41 (EGIDDLEADELLSLMANEQTR) constitute a propeptide that is removed on maturation. Intrachain disulfides connect C45/C60, C52/C69, C59/C85, and C71/C83.

It belongs to the neurotoxin 19 (CSTX) family. 02 (D7) subfamily. As to expression, expressed by the venom gland.

It is found in the secreted. The protein is Toxin-like structure LSTX-D3 of Lycosa singoriensis (Wolf spider).